An 808-amino-acid polypeptide reads, in one-letter code: Probable ATP-dependent helicase MJ1401 (808 aa).

Residues 189 to 217 (YKIDELDIPEELKEIIKSRGIEELLPVQT) carry the Q motif motif. The Helicase ATP-binding domain maps to 221-391 (KAGLLNGDDL…QLNAKLVLYN (171 aa)). 234 to 241 (SATSSGKT) contacts ATP. Residues 336–339 (DEIH) carry the DEIH box motif. In terms of domain architecture, Helicase C-terminal spans 396–585 (PLERHIIFCK…EDEEEEQILA (190 aa)).

It belongs to the DEAD box helicase family.

This is Probable ATP-dependent helicase MJ1401 from Methanocaldococcus jannaschii (strain ATCC 43067 / DSM 2661 / JAL-1 / JCM 10045 / NBRC 100440) (Methanococcus jannaschii).